Consider the following 93-residue polypeptide: Small ribosomal subunit protein uS19 (93 aa).

This sequence belongs to the universal ribosomal protein uS19 family.

In terms of biological role, protein S19 forms a complex with S13 that binds strongly to the 16S ribosomal RNA. In Campylobacter lari (strain RM2100 / D67 / ATCC BAA-1060), this protein is Small ribosomal subunit protein uS19.